We begin with the raw amino-acid sequence, 382 residues long: Alanine racemase (382 aa).

Lys39 functions as the Proton acceptor; specific for D-alanine in the catalytic mechanism. N6-(pyridoxal phosphate)lysine is present on Lys39. Arg138 contributes to the substrate binding site. Tyr265 (proton acceptor; specific for L-alanine) is an active-site residue. Met312 is a substrate binding site.

Belongs to the alanine racemase family. Requires pyridoxal 5'-phosphate as cofactor.

It carries out the reaction L-alanine = D-alanine. Its pathway is amino-acid biosynthesis; D-alanine biosynthesis; D-alanine from L-alanine: step 1/1. Catalyzes the interconversion of L-alanine and D-alanine. May also act on other amino acids. The protein is Alanine racemase (alr) of Staphylococcus epidermidis (strain ATCC 35984 / DSM 28319 / BCRC 17069 / CCUG 31568 / BM 3577 / RP62A).